The sequence spans 426 residues: Chromatin structure-remodeling complex subunit SFH1 (426 aa).

Position 78 is a phosphoserine (serine 78). The tract at residues 201–242 is interaction with STH1; sequence AIMIPITLDIEHMGHTIKDQFLWNYNDDSISPEEFASIYCKD.

This sequence belongs to the SNF5 family. As to quaternary structure, interacts directly with STH1. Component of the two forms of the RSC complex composed of at least either RSC1 or RSC2, and ARP7, ARP9, LDB7, NPL6, RSC3, RSC30, RSC4, RSC58, RSC6, RSC8, RSC9, SFH1, STH1, HTL1 and probably RTT102. The complexes interact with histone and histone variant components of centromeric chromatin. In terms of processing, phosphorylated in the G1 phase.

It localises to the nucleus. Functionally, component of the chromatin structure-remodeling complex (RSC), which is involved in transcription regulation and nucleosome positioning. RSC is responsible for the transfer of a histone octamer from a nucleosome core particle to naked DNA. The reaction requires ATP and involves an activated RSC-nucleosome intermediate. Remodeling reaction also involves DNA translocation, DNA twist and conformational change. As a reconfigurer of centromeric and flanking nucleosomes, RSC complex is required both for proper kinetochore function in chromosome segregation and, via a PKC1-dependent signaling pathway, for organization of the cellular cytoskeleton. This subunit is essential for mitotic growth and required for cell cycle progression. The protein is Chromatin structure-remodeling complex subunit SFH1 (SFH1) of Saccharomyces cerevisiae (strain ATCC 204508 / S288c) (Baker's yeast).